Consider the following 109-residue polypeptide: Set1 complex component sdc1 (109 aa).

The segment at Gln49–Ser109 is disordered. The segment covering Ser73 to Asn87 has biased composition (polar residues). A compositionally biased stretch (low complexity) spans Pro88–Ser101.

Belongs to the dpy-30 family. Component of the COMPASS (Set1C) complex composed of ash2, sdc1, set1, shg1, spp1, swd1, swd2 and swd3. Component of the Lid2 complex composed of ash2, jmj3, lid2, sdc1 and snt2.

The protein resides in the nucleus. The COMPASS (Set1C) complex specifically mono-, di- and trimethylates histone H3 to form H3K4me1/2/3, which subsequently activates gene expression by regulating transcription elongation and plays a role in telomere length maintenance. The chain is Set1 complex component sdc1 (sdc1) from Schizosaccharomyces pombe (strain 972 / ATCC 24843) (Fission yeast).